The following is a 480-amino-acid chain: Coronin-2B (480 aa).

WD repeat units follow at residues glycine 85–asparagine 125, glycine 135–aspartate 177, histidine 179–glutamate 217, cysteine 220–isoleucine 263, and glutamate 265–serine 308. Positions asparagine 436–asparagine 479 form a coiled coil.

The protein belongs to the WD repeat coronin family. As to quaternary structure, binds to F-actin and to vinculin.

It is found in the cytoplasm. The protein resides in the cytoskeleton. Its function is as follows. May play a role in the reorganization of neuronal actin structure. The polypeptide is Coronin-2B (Coro2b) (Mus musculus (Mouse)).